A 192-amino-acid polypeptide reads, in one-letter code: MEYRSLTLDDFLSRFQLLRPQINREPLNHRQAAVLIPIVRRPQPGLLLTQRSIHLRKHAGQVAFPGGAVDDTDASVIAAALREAEEEVAIPPSAVEVIGVLPPVDSVTGYQVTPVVGIIPPDLPYRASEDEVSAVFEMPLAQALHLGRYHPLDIYRRGDSHRVWLSWYEQYFVWGMTAGIIRELALQIGVKP.

In terms of domain architecture, Nudix hydrolase spans 29–160; it reads HRQAAVLIPI…PLDIYRRGDS (132 aa). The short motif at 67-89 is the Nudix box element; the sequence is GAVDDTDASVIAAALREAEEEVA. Positions 83 and 87 each coordinate Mg(2+).

This sequence belongs to the Nudix hydrolase family. PCD1 subfamily. It depends on Mn(2+) as a cofactor. Mg(2+) is required as a cofactor.

Functionally, probably mediates the hydrolysis of some nucleoside diphosphate derivatives. This is an uncharacterized protein from Shigella flexneri serotype 5b (strain 8401).